A 125-amino-acid chain; its full sequence is Small ribosomal subunit protein bS6 (125 aa).

The protein belongs to the bacterial ribosomal protein bS6 family.

In terms of biological role, binds together with bS18 to 16S ribosomal RNA. This Campylobacter jejuni (strain RM1221) protein is Small ribosomal subunit protein bS6.